The chain runs to 60 residues: Large ribosomal subunit protein uL30 (60 aa).

Belongs to the universal ribosomal protein uL30 family. As to quaternary structure, part of the 50S ribosomal subunit.

The sequence is that of Large ribosomal subunit protein uL30 from Pediococcus pentosaceus (strain ATCC 25745 / CCUG 21536 / LMG 10740 / 183-1w).